The primary structure comprises 288 residues: Bifunctional protein FolD (288 aa).

Residues 165 to 167 (GRS) and S190 contribute to the NADP(+) site.

It belongs to the tetrahydrofolate dehydrogenase/cyclohydrolase family. As to quaternary structure, homodimer.

It catalyses the reaction (6R)-5,10-methylene-5,6,7,8-tetrahydrofolate + NADP(+) = (6R)-5,10-methenyltetrahydrofolate + NADPH. The enzyme catalyses (6R)-5,10-methenyltetrahydrofolate + H2O = (6R)-10-formyltetrahydrofolate + H(+). The protein operates within one-carbon metabolism; tetrahydrofolate interconversion. In terms of biological role, catalyzes the oxidation of 5,10-methylenetetrahydrofolate to 5,10-methenyltetrahydrofolate and then the hydrolysis of 5,10-methenyltetrahydrofolate to 10-formyltetrahydrofolate. The sequence is that of Bifunctional protein FolD from Bdellovibrio bacteriovorus (strain ATCC 15356 / DSM 50701 / NCIMB 9529 / HD100).